The chain runs to 217 residues: Pyridoxine/pyridoxamine 5'-phosphate oxidase (217 aa).

Substrate contacts are provided by residues arginine 13 to tyrosine 16 and lysine 71. Residues arginine 66–lysine 71, tyrosine 81–threonine 82, arginine 87, lysine 88, and glutamine 110 contribute to the FMN site. Substrate contacts are provided by tyrosine 128, arginine 132, and serine 136. FMN is bound by residues glutamine 145 to serine 146 and tryptophan 190. Arginine 196–histidine 198 contributes to the substrate binding site. Arginine 200 lines the FMN pocket.

Belongs to the pyridoxamine 5'-phosphate oxidase family. As to quaternary structure, homodimer. FMN is required as a cofactor.

It catalyses the reaction pyridoxamine 5'-phosphate + O2 + H2O = pyridoxal 5'-phosphate + H2O2 + NH4(+). It carries out the reaction pyridoxine 5'-phosphate + O2 = pyridoxal 5'-phosphate + H2O2. It functions in the pathway cofactor metabolism; pyridoxal 5'-phosphate salvage; pyridoxal 5'-phosphate from pyridoxamine 5'-phosphate: step 1/1. The protein operates within cofactor metabolism; pyridoxal 5'-phosphate salvage; pyridoxal 5'-phosphate from pyridoxine 5'-phosphate: step 1/1. Catalyzes the oxidation of either pyridoxine 5'-phosphate (PNP) or pyridoxamine 5'-phosphate (PMP) into pyridoxal 5'-phosphate (PLP). The chain is Pyridoxine/pyridoxamine 5'-phosphate oxidase from Serratia proteamaculans (strain 568).